A 137-amino-acid polypeptide reads, in one-letter code: Large ribosomal subunit protein uL16 (137 aa).

This sequence belongs to the universal ribosomal protein uL16 family. As to quaternary structure, part of the 50S ribosomal subunit.

Functionally, binds 23S rRNA and is also seen to make contacts with the A and possibly P site tRNAs. In Stenotrophomonas maltophilia (strain R551-3), this protein is Large ribosomal subunit protein uL16.